Reading from the N-terminus, the 122-residue chain is Large ribosomal subunit protein uL14c (122 aa).

It belongs to the universal ribosomal protein uL14 family. As to quaternary structure, part of the 50S ribosomal subunit.

It localises to the plastid. It is found in the chloroplast. Binds to 23S rRNA. The sequence is that of Large ribosomal subunit protein uL14c from Oenothera biennis (German evening primrose).